The chain runs to 1165 residues: DNA-directed RNA polymerase subunit beta (1165 aa).

It belongs to the RNA polymerase beta chain family. In terms of assembly, the RNAP catalytic core consists of 2 alpha, 1 beta, 1 beta' and 1 omega subunit. When a sigma factor is associated with the core the holoenzyme is formed, which can initiate transcription.

The enzyme catalyses RNA(n) + a ribonucleoside 5'-triphosphate = RNA(n+1) + diphosphate. Functionally, DNA-dependent RNA polymerase catalyzes the transcription of DNA into RNA using the four ribonucleoside triphosphates as substrates. The chain is DNA-directed RNA polymerase subunit beta from Corynebacterium glutamicum (strain ATCC 13032 / DSM 20300 / JCM 1318 / BCRC 11384 / CCUG 27702 / LMG 3730 / NBRC 12168 / NCIMB 10025 / NRRL B-2784 / 534).